The primary structure comprises 282 residues: MTSADYASRQRAIIAELNVASEFDAEAEIARRVEFLAQYLRSTGLRTYVLGISGGVDSSTAGRLAQLSVEKLRADGYDARFVAMRLPNGVQNDEADAQRALAFVRADEELTVNVKPAADAMLGALAASGHAFETPAQQDFVHGNIKARERMIAQYAVAGARRGIVIGTDHAAESLMGFFTKFGDGGADILPLAGLNKRRVRAVARALGGEELIVMKVPTADLEELRPLRPDEHAYGVSYDEIDDFLEGKPVADNVYETVLRFYDASRHKRALPYTMFDWPTA.

ATP is bound at residue 51–58; that stretch reads GISGGVDS. Asp-57 is a Mg(2+) binding site. Arg-148 is a binding site for deamido-NAD(+). Position 168 (Thr-168) interacts with ATP. Glu-173 contributes to the Mg(2+) binding site. Positions 181 and 188 each coordinate deamido-NAD(+). Residues Lys-197 and Thr-219 each coordinate ATP. 268-269 lines the deamido-NAD(+) pocket; it reads HK.

Belongs to the NAD synthetase family. As to quaternary structure, homodimer.

It catalyses the reaction deamido-NAD(+) + NH4(+) + ATP = AMP + diphosphate + NAD(+) + H(+). It participates in cofactor biosynthesis; NAD(+) biosynthesis; NAD(+) from deamido-NAD(+) (ammonia route): step 1/1. Functionally, catalyzes the ATP-dependent amidation of deamido-NAD to form NAD. Uses ammonia as a nitrogen source. The protein is NH(3)-dependent NAD(+) synthetase of Burkholderia lata (strain ATCC 17760 / DSM 23089 / LMG 22485 / NCIMB 9086 / R18194 / 383).